An 867-amino-acid chain; its full sequence is Cation/H(+) antiporter 23, chloroplastic (867 aa).

The next 12 membrane-spanning stretches (helical) occupy residues 43–63 (SGST…VANL), 75–95 (LYLP…PSVL), 112–132 (MVLE…LGLG), 146–166 (VIIA…LYYL), 175–195 (IISG…PDLA), 212–232 (AMCA…FGFA), 242–262 (KMMP…IFVI), 283–303 (HVWF…ACGV), 336–356 (GILM…GFML), 362–382 (FMMV…TVIT), 393–413 (AFAI…VLNA), and 427–447 (HMTI…AFAY). The tract at residues 848–867 (SMYEDEDEDDEEDHQYGIHR) is disordered. Acidic residues predominate over residues 851–860 (EDEDEDDEED).

It belongs to the monovalent cation:proton antiporter 2 (CPA2) transporter (TC 2.A.37) family. CHX (TC 2.A.37.4) subfamily. In terms of tissue distribution, specifically expressed in flower buds and pollen. Expressed in leaves, roots and stems.

It is found in the plastid. The protein resides in the chloroplast membrane. The protein localises to the endoplasmic reticulum membrane. In terms of biological role, operates as a K(+)/H(+) antiporter or Na(+)/H(+) antiporter of the chloroplast envelope that functions in pH homeostasis and chloroplast development. Monovalent cation transporter with a preference for Cs(+), K(+) and Rb(+) relative to Na(+) or Li(+). Required for pollen tube guidance, but not for normal pollen development. May also be involved in the development or function of the female gametophyte. This Arabidopsis thaliana (Mouse-ear cress) protein is Cation/H(+) antiporter 23, chloroplastic (CHX23).